Here is a 125-residue protein sequence, read N- to C-terminus: MKSIEDYTLLSAYYHLLFTIEEGLCYLIEAEENLSKTEGDRIYQDLIQAFFYLDSTHSTLLFIMDSRCAEICVKAFDQIFAEFDQLVSFSFPSHEFCEYLKEHFLIHYRKWMLSIHQCMEPFLIN.

This is an uncharacterized protein from Bacillus subtilis (strain 168).